Here is a 274-residue protein sequence, read N- to C-terminus: Large ribosomal subunit protein uL2 (274 aa).

The tract at residues 221-274 (RGTAMNPVDHPHGGGEGRNFGKHPVTPWGVQTKGKKTRSNKRTDKFIVRRRSKK) is disordered.

It belongs to the universal ribosomal protein uL2 family. Part of the 50S ribosomal subunit. Forms a bridge to the 30S subunit in the 70S ribosome.

Functionally, one of the primary rRNA binding proteins. Required for association of the 30S and 50S subunits to form the 70S ribosome, for tRNA binding and peptide bond formation. It has been suggested to have peptidyltransferase activity; this is somewhat controversial. Makes several contacts with the 16S rRNA in the 70S ribosome. The chain is Large ribosomal subunit protein uL2 from Yersinia enterocolitica.